A 171-amino-acid polypeptide reads, in one-letter code: MSNIGRNVSGDLKEKLISVNRVSKTVKGGRIFSFSALTVVGDGHGKVGFGYGKAREVPSAIQKAMEKARRNMIQVPLNNGTLQYSVTGSYTGSYIFMKPASNGTGIIAGGAMRSVLEVAGVHNVLAKTYGSTNPINVVRATMLVLESMKSPEMIALKRNKLVKEILENSYL.

Residues 12–75 form the S5 DRBM domain; sequence LKEKLISVNR…EKARRNMIQV (64 aa).

It belongs to the universal ribosomal protein uS5 family. As to quaternary structure, part of the 30S ribosomal subunit. Contacts proteins S4 and S8.

Its function is as follows. With S4 and S12 plays an important role in translational accuracy. In terms of biological role, located at the back of the 30S subunit body where it stabilizes the conformation of the head with respect to the body. The protein is Small ribosomal subunit protein uS5 of Buchnera aphidicola subsp. Baizongia pistaciae (strain Bp).